Here is a 623-residue protein sequence, read N- to C-terminus: Xaa-Pro aminopeptidase 1 (623 aa).

Residue R77 coordinates a peptide. N6-acetyllysine is present on K304. H395 is an a peptide binding site. D415, D426, and H489 together coordinate Mn(2+). Residues H489, H498, and E523 each coordinate a peptide. E523 and E537 together coordinate Mn(2+).

Belongs to the peptidase M24B family. In terms of assembly, homodimer. Requires Mn(2+) as cofactor. Expressed in all tissues tested, including liver, adrenal decapsular tissue, adrenal capsular tissue, corpus luteum, testis, submandibular gland, thymus, brain, cerebellum and heart. Highest levels in testis.

It localises to the cytoplasm. It catalyses the reaction Release of any N-terminal amino acid, including proline, that is linked to proline, even from a dipeptide or tripeptide.. With respect to regulation, inhibited by inositol hexakisphosphate. Functionally, metalloaminopeptidase that catalyzes the removal of a penultimate prolyl residue from the N-termini of peptides, such as Arg-Pro-Pro. Contributes to the degradation of bradykinin. The polypeptide is Xaa-Pro aminopeptidase 1 (Rattus norvegicus (Rat)).